A 132-amino-acid chain; its full sequence is Small ribosomal subunit protein bS16 (132 aa).

The span at 82–107 shows a compositional bias: basic and acidic residues; sequence DSKVQSKKEHNANKVKKEVKKPEAKK. The disordered stretch occupies residues 82–132; the sequence is DSKVQSKKEHNANKVKKEVKKPEAKKAAASKPASKPSASKSASQKKTVSKK. The span at 108–132 shows a compositional bias: low complexity; the sequence is AAASKPASKPSASKSASQKKTVSKK.

This sequence belongs to the bacterial ribosomal protein bS16 family.

This is Small ribosomal subunit protein bS16 from Malacoplasma penetrans (strain HF-2) (Mycoplasma penetrans).